The following is a 110-amino-acid chain: UPF0060 membrane protein Pfl01_4105 (110 aa).

Transmembrane regions (helical) follow at residues 5 to 25 (LWFF…WMWL), 28 to 48 (GKSA…ALLL), 59 to 79 (AYAA…AVVE), and 84 to 104 (LGSD…ILFG).

It belongs to the UPF0060 family.

The protein resides in the cell inner membrane. This chain is UPF0060 membrane protein Pfl01_4105, found in Pseudomonas fluorescens (strain Pf0-1).